We begin with the raw amino-acid sequence, 775 residues long: Glutamine--tRNA ligase (775 aa).

An N-acetylalanine modification is found at alanine 2. Serine 70 is subject to Phosphoserine. ATP is bound by residues 271 to 273 (EPN) and 277 to 283 (HIGHAKA). Residue aspartate 303 coordinates L-glutamine. An N6-acetyllysine modification is found at lysine 309. Tyrosine 438 lines the L-glutamine pocket. Residues threonine 457, 486 to 487 (RL), and 494 to 496 (VSK) contribute to the ATP site. A Phosphoserine modification is found at serine 495.

Belongs to the class-I aminoacyl-tRNA synthetase family. As to quaternary structure, monomer. Part of a multisubunit complex that groups tRNA ligases for Arg (RARS1), Asp (DARS1), Gln (QARS1), Ile (IARS1), Leu (LARS1), Lys (KARS1), Met (MARS1) the bifunctional ligase for Glu and Pro (EPRS1) and the auxiliary subunits AIMP1/p43, AIMP2/p38 and EEF1E1/p18. Interacts with RARS1. Part of a complex composed of RARS1, QARS1 and AIMP1. In terms of tissue distribution, detected in dorsal root ganglia (at protein level). Detected in dorsal root ganglia.

It is found in the cytoplasm. It localises to the cytosol. It carries out the reaction tRNA(Gln) + L-glutamine + ATP = L-glutaminyl-tRNA(Gln) + AMP + diphosphate. In terms of biological role, glutamine--tRNA ligase. Plays a critical role in brain development. The polypeptide is Glutamine--tRNA ligase (Qars1) (Rattus norvegicus (Rat)).